Reading from the N-terminus, the 98-residue chain is NADH-ubiquinone oxidoreductase chain 4L (98 aa).

3 consecutive transmembrane segments (helical) span residues 1-21 (MIPTYMNIMLAFTISLLGMLT), 27-47 (VASLLCLEGMMMSLFIMATLI), and 61-81 (IILLVFAACEAAVGLALLISI).

Belongs to the complex I subunit 4L family. Core subunit of respiratory chain NADH dehydrogenase (Complex I) which is composed of 45 different subunits.

The protein localises to the mitochondrion inner membrane. It carries out the reaction a ubiquinone + NADH + 5 H(+)(in) = a ubiquinol + NAD(+) + 4 H(+)(out). Core subunit of the mitochondrial membrane respiratory chain NADH dehydrogenase (Complex I) which catalyzes electron transfer from NADH through the respiratory chain, using ubiquinone as an electron acceptor. Part of the enzyme membrane arm which is embedded in the lipid bilayer and involved in proton translocation. The chain is NADH-ubiquinone oxidoreductase chain 4L (MT-ND4L) from Macaca hecki (Heck's macaque).